A 250-amino-acid chain; its full sequence is Probable transcriptional regulatory protein ckrop_1032 (250 aa).

The disordered stretch occupies residues 1–22 (MSGHSKWATTKHKKAANDAKRG).

It belongs to the TACO1 family.

The protein resides in the cytoplasm. This Corynebacterium kroppenstedtii (strain DSM 44385 / JCM 11950 / CIP 105744 / CCUG 35717) protein is Probable transcriptional regulatory protein ckrop_1032.